The chain runs to 102 residues: MLSRLQELRKEEETLLRLKAALHDQLNRLKVEELALQSMINSRGRTETLSSQPAPEQLCDMSLHVDNEVTINQTTLKLSTRSPMEEEEEEEEEEEEEEESDS.

The span at 73 to 82 (QTTLKLSTRS) shows a compositional bias: polar residues. A disordered region spans residues 73–102 (QTTLKLSTRSPMEEEEEEEEEEEEEEESDS). Over residues 85–102 (EEEEEEEEEEEEEEESDS) the composition is skewed to acidic residues.

In terms of assembly, part of the SNAPc complex composed of 5 subunits: SNAPC1, SNAPC2, SNAPC3, SNAPC4 and SNAPC5. SNAPC5 interacts with SNAPC4.

The protein localises to the nucleus. Functionally, part of the SNAPc complex required for the transcription of both RNA polymerase II and III small-nuclear RNA genes. Binds to the proximal sequence element (PSE), a non-TATA-box basal promoter element common to these 2 types of genes. Recruits TBP and BRF2 to the U6 snRNA TATA box. In Mus musculus (Mouse), this protein is snRNA-activating protein complex subunit 5.